The following is a 362-amino-acid chain: DNA replication and repair protein RecF (362 aa).

30–37 (GLNAQGKS) lines the ATP pocket.

This sequence belongs to the RecF family.

Its subcellular location is the cytoplasm. Functionally, the RecF protein is involved in DNA metabolism; it is required for DNA replication and normal SOS inducibility. RecF binds preferentially to single-stranded, linear DNA. It also seems to bind ATP. The protein is DNA replication and repair protein RecF of Thermoanaerobacter sp. (strain X514).